We begin with the raw amino-acid sequence, 201 residues long: Large ribosomal subunit protein uL4 (201 aa).

The tract at residues 46–71 (QKTRAEITGTGKKPWRQKGTGRARAG) is disordered.

This sequence belongs to the universal ribosomal protein uL4 family. Part of the 50S ribosomal subunit.

Functionally, one of the primary rRNA binding proteins, this protein initially binds near the 5'-end of the 23S rRNA. It is important during the early stages of 50S assembly. It makes multiple contacts with different domains of the 23S rRNA in the assembled 50S subunit and ribosome. In terms of biological role, forms part of the polypeptide exit tunnel. The sequence is that of Large ribosomal subunit protein uL4 from Shewanella amazonensis (strain ATCC BAA-1098 / SB2B).